The primary structure comprises 287 residues: Small ribosomal subunit biogenesis GTPase RsgA (287 aa).

Positions 61–218 constitute a CP-type G domain; that stretch reads SSELIRPTVA…LVDTPGFTTL (158 aa). GTP is bound by residues 110 to 113 and 161 to 169; these read NKED and GPSGAGKST. Zn(2+)-binding residues include Cys242, Cys247, His249, and Cys255.

It belongs to the TRAFAC class YlqF/YawG GTPase family. RsgA subfamily. Monomer. Associates with 30S ribosomal subunit, binds 16S rRNA. It depends on Zn(2+) as a cofactor.

It localises to the cytoplasm. One of several proteins that assist in the late maturation steps of the functional core of the 30S ribosomal subunit. Helps release RbfA from mature subunits. May play a role in the assembly of ribosomal proteins into the subunit. Circularly permuted GTPase that catalyzes slow GTP hydrolysis, GTPase activity is stimulated by the 30S ribosomal subunit. The protein is Small ribosomal subunit biogenesis GTPase RsgA of Clostridium perfringens (strain SM101 / Type A).